The sequence spans 1520 residues: DNA topoisomerase 2 top-2 (1520 aa).

A compositionally biased stretch (acidic residues) spans 1 to 10 (MSDSDSEFSI). A disordered region spans residues 1 to 40 (MSDSDSEFSIEDSPKKKTAPKKEKASPKKKKDDANESMVM). The segment covering 12-34 (DSPKKKTAPKKEKASPKKKKDDA) has biased composition (basic and acidic residues). Residues Asn126, Asn155, 183–185 (SSN), 196–203 (GRNGYGAK), and 411–413 (QTK) contribute to the ATP site. Residues 490–607 (CTLILTEGDS…SLIQRNFVEE (118 aa)) enclose the Toprim domain. 3 residues coordinate Mg(2+): Glu496, Asp576, and Asp578. Positions 750-1219 (IPCLVDGFKP…TWQDLWHEDL (470 aa)) constitute a Topo IIA-type catalytic domain. The active-site O-(5'-phospho-DNA)-tyrosine intermediate is the Tyr840. A disordered region spans residues 1249 to 1520 (AADAKTGRGP…RGRVVDSDSD (272 aa)). Positions 1283-1320 (TKAKYEKMSQPKKERVKKEPKEPKEPKKVKKEGQDIKK) are enriched in basic and acidic residues. A compositionally biased stretch (acidic residues) spans 1342–1364 (MSEESDVEFDEGIDFDSDDDGVE).

This sequence belongs to the type II topoisomerase family. Homodimer. Interacts with nmad-1; the interaction is required for localization of top-2 to DNA. Interacts with gcna-1; this interaction allows the resolution of topoisomerase 2 DNA-protein cross-links. Mg(2+) serves as cofactor. It depends on Mn(2+) as a cofactor. Requires Ca(2+) as cofactor. Expressed in the hermaphrodite and male germline.

It localises to the nucleus. The protein resides in the nucleoplasm. Its subcellular location is the chromosome. It is found in the cytoplasm. The protein localises to the cytoskeleton. It localises to the spindle. The enzyme catalyses ATP-dependent breakage, passage and rejoining of double-stranded DNA.. Functionally, control of topological states of DNA by transient breakage and subsequent rejoining of DNA strands. Topoisomerase II makes double-strand breaks. Essential during mitosis in the adult germline and during embryogenesis for proper segregation of daughter chromosomes. Required for centromere resolution during mitosis. Required for chromosome segregation in anaphase of meiosis I during spermatogenesis. Promotes cleavage furrow stability during cytokinesis upon the presence of chromatin obstructions. Promotes DNA break formation upon zygotic genome activation in the Z2 and Z3 primordial germ cells in L1 larvae, thereby activating a checkpoint response. Essential for embryogenesis. The protein is DNA topoisomerase 2 top-2 of Caenorhabditis elegans.